A 255-amino-acid polypeptide reads, in one-letter code: Thiazole synthase (255 aa).

The Schiff-base intermediate with DXP role is filled by lysine 96. 1-deoxy-D-xylulose 5-phosphate contacts are provided by residues glycine 157, 183-184 (AG), and 205-206 (NS).

The protein belongs to the ThiG family. As to quaternary structure, homotetramer. Forms heterodimers with either ThiH or ThiS.

The protein resides in the cytoplasm. The enzyme catalyses [ThiS sulfur-carrier protein]-C-terminal-Gly-aminoethanethioate + 2-iminoacetate + 1-deoxy-D-xylulose 5-phosphate = [ThiS sulfur-carrier protein]-C-terminal Gly-Gly + 2-[(2R,5Z)-2-carboxy-4-methylthiazol-5(2H)-ylidene]ethyl phosphate + 2 H2O + H(+). It functions in the pathway cofactor biosynthesis; thiamine diphosphate biosynthesis. Its function is as follows. Catalyzes the rearrangement of 1-deoxy-D-xylulose 5-phosphate (DXP) to produce the thiazole phosphate moiety of thiamine. Sulfur is provided by the thiocarboxylate moiety of the carrier protein ThiS. In vitro, sulfur can be provided by H(2)S. The protein is Thiazole synthase of Staphylococcus carnosus (strain TM300).